Consider the following 576-residue polypeptide: MNKEALKRLIAVAAGREEPDLVIKNAKVVDVFNARVIQGDIAIVDGLIAGVGDYSCKNELDAEGQYAAPGFIDSHIHIESSYVSPEELGRLLVPHGTTTIIADPHEIANVCGLKGLDYMIEAAKRTALDVQMMLPSCVPATPFEHSGANIDAREMEKPITYDEVLGLGEFMDFPGVINGVDATIEKLLVAKRAGKPIDGHSPGVSGNALNAYASARIGTDHECATVEEMHERIARGMYVLLRQGSACYNLRTLLKGVTPVNSRRCLFCADDCQPKTILSLGHLDNHLRICAEEGIDPIMAIQMATINAAECFGLKDRGAIAPGLKADIVLMDSLTNCRVEKVWIDGVLIADSGKYLPEIKRHDISSTKGNFKVKDFSVKKLKLAIQSPQAHVINILPGGVVTSKEVVAINRNSDNEFVYGHGQDVVKIAVVERHQNTGNVAVALLQGYGIKRGAIALSVAHDSHNIIVVGVDDTDMACAVEALIAQDGGIVLVNGEEVVESMPMPIAGLMSDQCGEWVEAKLTSIHSKAHEVLGVNADVEPVMTLCFMSLAVIPEIKLTDMGLFDVTKFDFISLEA.

Belongs to the metallo-dependent hydrolases superfamily. Adenine deaminase family. It depends on Mn(2+) as a cofactor.

It catalyses the reaction adenine + H2O + H(+) = hypoxanthine + NH4(+). This chain is Adenine deaminase 2, found in Desulfotalea psychrophila (strain LSv54 / DSM 12343).